A 245-amino-acid polypeptide reads, in one-letter code: Polyhedrin (245 aa).

The tract at residues lysine 32–lysine 35 is nuclear localization signal.

Belongs to the polyhedrin family.

The protein localises to the host nucleus. In terms of biological role, major component of the virus occlusion bodies which are large proteinaceous structures termed polyhedra. These structures serve as the protective package for the virus particles outside the infected host and allow natural transmission of virus between insect hosts, assisting persistence in the environment. Forms the paracrystalline lattice of polyhedra and interacts with enveloped virions as well as other accessory molecules and structures to form a mature viral occlusion body. This is Polyhedrin (PH) from Lepidoptera (butterflies and moths).